Consider the following 209-residue polypeptide: SAGA-associated factor 11 homolog 1 (209 aa).

The disordered stretch occupies residues 1–36 (MSRTIVVKNPRTSGKDEDKAQIPSQDELPSGSSGAK). The SGF11-type zinc finger occupies 120 to 141 (CCCPNCERMVAAVRFAPHLQTC). The segment covering 156–166 (LTVSSRSSSTS) has biased composition (low complexity). The tract at residues 156–209 (LTVSSRSSSTSTGGGQANEKSTDDEDWSLDSRPGKSTKNSRNKGSKKNQKNKLK) is disordered. The span at 193–209 (KNSRNKGSKKNQKNKLK) shows a compositional bias: basic residues.

The protein belongs to the SGF11 family. As to quaternary structure, component of some SAGA transcription coactivator-HAT complexes, at least composed of Ada2b, not/nonstop, Pcaf/Gcn5, Sgf11 and Spt3. Within the SAGA complex, Sgf11, e(y)2, and not/nonstop form an additional subcomplex of SAGA called the DUB module (deubiquitination module). Interacts directly with not/nonstop. Interacts with the AMEX complex component xmas-2. Interacts with Cbp80; important for promoter recruitment of Sgf11 that is not associated with the DUB module.

It is found in the nucleus. The protein localises to the nucleoplasm. The protein resides in the cytoplasm. Its function is as follows. Component of the transcription regulatory histone acetylation (HAT) complex SAGA, a multiprotein complex that activates transcription by remodeling chromatin and mediating histone acetylation and deubiquitination. Within the SAGA complex, participates in a subcomplex that specifically deubiquitinates histone H2B. The SAGA complex is recruited to specific gene promoters by activators, where it is required for transcription. Required for nuclear receptor-mediated transactivation. Binds independently on SAGA to promoters in an RNA-dependent manner. Binds to mRNA and is essential for total mRNA export from the nucleus. Required to counteract heterochromatin silencing. Controls the development of neuronal connectivity in visual system by being required for accurate axon targeting in the optic lobe. Required for expression of ecdysone-induced genes such as br/broad. In Drosophila willistoni (Fruit fly), this protein is SAGA-associated factor 11 homolog 1.